A 321-amino-acid polypeptide reads, in one-letter code: Peptide transport system permease protein SapB (321 aa).

The next 8 helical transmembrane spans lie at 8–28, 41–61, 82–102, 117–137, 150–170, 180–200, 249–269, and 289–309; these read HILW…VILL, IYIG…GITY, CFIT…ISAV, YVGL…VAAL, LLYE…FMEV, ILQH…MEII, VFTL…WPGI, and VIVI…FTFI. The ABC transmembrane type-1 domain maps to 75-303; sequence LPPTLELCFI…VCIILIDTFT (229 aa).

Belongs to the binding-protein-dependent transport system permease family. OppBC subfamily.

The protein resides in the cell inner membrane. In terms of biological role, involved in a peptide intake transport system that plays a role in the resistance to antimicrobial peptides. The sequence is that of Peptide transport system permease protein SapB (sapB) from Haemophilus influenzae (strain ATCC 51907 / DSM 11121 / KW20 / Rd).